Here is a 176-residue protein sequence, read N- to C-terminus: NAD(P)H-quinone oxidoreductase subunit 6, chloroplastic (176 aa).

5 helical membrane-spanning segments follow: residues 10–30 (ILLVFLGSGLILGGLGVVLLT), 32–52 (PIYSAFSLGLVLVCISLFHIP), 61–81 (AQLLIYVGAVNVLIVFAVMFM), 92–112 (LWTVGDGVTSLVCTSILFSLI), and 152–172 (FYLPFELISIILLVALIGAIS).

Belongs to the complex I subunit 6 family. As to quaternary structure, NDH is composed of at least 16 different subunits, 5 of which are encoded in the nucleus.

It is found in the plastid. It localises to the chloroplast thylakoid membrane. It carries out the reaction a plastoquinone + NADH + (n+1) H(+)(in) = a plastoquinol + NAD(+) + n H(+)(out). It catalyses the reaction a plastoquinone + NADPH + (n+1) H(+)(in) = a plastoquinol + NADP(+) + n H(+)(out). In terms of biological role, NDH shuttles electrons from NAD(P)H:plastoquinone, via FMN and iron-sulfur (Fe-S) centers, to quinones in the photosynthetic chain and possibly in a chloroplast respiratory chain. The immediate electron acceptor for the enzyme in this species is believed to be plastoquinone. Couples the redox reaction to proton translocation, and thus conserves the redox energy in a proton gradient. The sequence is that of NAD(P)H-quinone oxidoreductase subunit 6, chloroplastic (ndhG) from Liriodendron tulipifera (Tuliptree).